The chain runs to 382 residues: UDP-N-acetylglucosamine--N-acetylmuramyl-(pentapeptide) pyrophosphoryl-undecaprenol N-acetylglucosamine transferase (382 aa).

Residues 17-19 (TAG), Asn137, Arg179, Ser213, and Gln308 contribute to the UDP-N-acetyl-alpha-D-glucosamine site.

The protein belongs to the glycosyltransferase 28 family. MurG subfamily.

The protein localises to the cell membrane. It carries out the reaction di-trans,octa-cis-undecaprenyl diphospho-N-acetyl-alpha-D-muramoyl-L-alanyl-D-glutamyl-meso-2,6-diaminopimeloyl-D-alanyl-D-alanine + UDP-N-acetyl-alpha-D-glucosamine = di-trans,octa-cis-undecaprenyl diphospho-[N-acetyl-alpha-D-glucosaminyl-(1-&gt;4)]-N-acetyl-alpha-D-muramoyl-L-alanyl-D-glutamyl-meso-2,6-diaminopimeloyl-D-alanyl-D-alanine + UDP + H(+). It participates in cell wall biogenesis; peptidoglycan biosynthesis. Cell wall formation. Catalyzes the transfer of a GlcNAc subunit on undecaprenyl-pyrophosphoryl-MurNAc-pentapeptide (lipid intermediate I) to form undecaprenyl-pyrophosphoryl-MurNAc-(pentapeptide)GlcNAc (lipid intermediate II). The protein is UDP-N-acetylglucosamine--N-acetylmuramyl-(pentapeptide) pyrophosphoryl-undecaprenol N-acetylglucosamine transferase of Rhodococcus opacus (strain B4).